We begin with the raw amino-acid sequence, 300 residues long: LysM and putative peptidoglycan-binding domain-containing protein 3 (300 aa).

The Extracellular segment spans residues Met-1–Gly-216. N-linked (GlcNAc...) asparagine glycosylation is found at Asn-7 and Asn-26. Residue Ser-55 is modified to Phosphoserine. Positions Leu-65 to Ile-109 constitute a LysM domain. The tract at residues Pro-136–Gly-157 is disordered. Residues Glu-140–Ala-156 are compositionally biased toward polar residues. Asn-199 carries N-linked (GlcNAc...) asparagine glycosylation. The chain crosses the membrane as a helical span at residues Trp-217 to Leu-237. The Cytoplasmic portion of the chain corresponds to Tyr-238 to Asp-300. Residues Val-253–Asp-300 are disordered. The span at Gln-286–Asp-300 shows a compositional bias: basic and acidic residues.

The protein resides in the cell membrane. It localises to the golgi apparatus. Its function is as follows. Essential for Golgi structural integrity. In Rattus norvegicus (Rat), this protein is LysM and putative peptidoglycan-binding domain-containing protein 3 (Lysmd3).